The primary structure comprises 33 residues: U-limacoditoxin(13)-As11 (33 aa).

An N-terminal signal peptide occupies residues 1 to 19 (MFKLLLVLALTMLAQSALA). F32 bears the Phenylalanine amide mark.

Belongs to the FARP (FMRFamide related peptide) family. Expressed by the venom secretory cell of the spine. The spine is a cuticular structure containing a single large nucleated venom-secreting cell at its base. It is an independent unit capable of producing, storing and injecting venom. On the back of A.stimulea caterpillars, spines are grouped together by 50 to 100 to form scoli, of which there are eight.

The protein resides in the secreted. Is toxic when injected into Drosophila melanogaster. Also shows a low anthelmintic activity against the parasitic nematode H.contortus (drug susceptible Kirby isolate). The chain is U-limacoditoxin(13)-As11 from Acharia stimulea (Saddleback caterpillar moth).